We begin with the raw amino-acid sequence, 174 residues long: ATP synthase subunit b (174 aa).

Residues 18-38 (IIVVSGSFLILMFLLKHFAWG) traverse the membrane as a helical segment.

This sequence belongs to the ATPase B chain family. F-type ATPases have 2 components, F(1) - the catalytic core - and F(0) - the membrane proton channel. F(1) has five subunits: alpha(3), beta(3), gamma(1), delta(1), epsilon(1). F(0) has three main subunits: a(1), b(2) and c(10-14). The alpha and beta chains form an alternating ring which encloses part of the gamma chain. F(1) is attached to F(0) by a central stalk formed by the gamma and epsilon chains, while a peripheral stalk is formed by the delta and b chains.

Its subcellular location is the cell membrane. Its function is as follows. F(1)F(0) ATP synthase produces ATP from ADP in the presence of a proton or sodium gradient. F-type ATPases consist of two structural domains, F(1) containing the extramembraneous catalytic core and F(0) containing the membrane proton channel, linked together by a central stalk and a peripheral stalk. During catalysis, ATP synthesis in the catalytic domain of F(1) is coupled via a rotary mechanism of the central stalk subunits to proton translocation. In terms of biological role, component of the F(0) channel, it forms part of the peripheral stalk, linking F(1) to F(0). The chain is ATP synthase subunit b from Enterococcus hirae (strain ATCC 9790 / DSM 20160 / JCM 8729 / LMG 6399 / NBRC 3181 / NCIMB 6459 / NCDO 1258 / NCTC 12367 / WDCM 00089 / R).